Reading from the N-terminus, the 483-residue chain is Probable ATP-dependent RNA helicase DDX6 (483 aa).

2 disordered regions span residues 1-39 and 55-75; these read MSTA…TQTQ and TQQQ…WKKT. Residues 55–66 are compositionally biased toward polar residues; it reads TQQQAQSMTTTI. A Q motif motif is present at residues 96-124; that stretch reads NEFEDYCLKRELLMGIFEMGWEKPSPIQE. Residues 127-298 enclose the Helicase ATP-binding domain; it reads IPIALSGRDI…NSHLQKPYEI (172 aa). 140–147 serves as a coordination point for ATP; the sequence is AKNGTGKS. Positions 246–249 match the DEAD box motif; that stretch reads DEAD. The Helicase C-terminal domain maps to 308 to 468; sequence GVTQYYAYVT…PIPSNIDKSL (161 aa).

It belongs to the DEAD box helicase family. DDX6/DHH1 subfamily.

It is found in the cytoplasm. The protein resides in the P-body. Its subcellular location is the nucleus. The enzyme catalyses ATP + H2O = ADP + phosphate + H(+). Essential for the formation of P-bodies, cytosolic membrane-less ribonucleoprotein granules involved in RNA metabolism through the coordinated storage of mRNAs encoding regulatory functions. Plays a role in P-bodies to coordinate the storage of translationally inactive mRNAs in the cytoplasm and prevent their degradation. This is Probable ATP-dependent RNA helicase DDX6 (DDX6) from Gallus gallus (Chicken).